The chain runs to 244 residues: Orotidine 5'-phosphate decarboxylase (244 aa).

Residues D20, K42, 70-79 (DLKFFDIPAT), T125, R186, Q195, G215, and R216 contribute to the substrate site. K72 (proton donor) is an active-site residue.

Belongs to the OMP decarboxylase family. Type 1 subfamily. Homodimer.

The enzyme catalyses orotidine 5'-phosphate + H(+) = UMP + CO2. Its pathway is pyrimidine metabolism; UMP biosynthesis via de novo pathway; UMP from orotate: step 2/2. Catalyzes the decarboxylation of orotidine 5'-monophosphate (OMP) to uridine 5'-monophosphate (UMP). This chain is Orotidine 5'-phosphate decarboxylase, found in Xylella fastidiosa (strain M12).